The chain runs to 532 residues: Exopolysaccharide phosphotransferase CpsY (532 aa).

Belongs to the stealth family.

The chain is Exopolysaccharide phosphotransferase CpsY (cpsY) from Mycobacterium bovis (strain ATCC BAA-935 / AF2122/97).